Consider the following 369-residue polypeptide: uncharacterized protein (369 aa).

Helical transmembrane passes span 25-45, 47-67, 119-139, 152-172, 206-226, 235-255, 272-292, 296-316, and 323-343; these read QFVALSIWIILITLFSLWYDW, FCLLNLTIVGFFIAFCYFVPA, LNIVHLFVISGFHLSFLFNLM, LSGFAVLLIYLFLVGFAFSAL, HALNNFGFNFSFLACFVLLFV, LKPLVSSSLILIVISPLSLYL, PIALFYFCVSWIILPFIGVFG, FGIYLPLKMLSEWSLKVTVFL, and LIFFFVYYGLLGLLYTIFTVA.

It to B.subtilis ComEC.

The protein resides in the cell membrane. This is an uncharacterized protein from Mycoplasma genitalium (strain ATCC 33530 / DSM 19775 / NCTC 10195 / G37) (Mycoplasmoides genitalium).